The sequence spans 274 residues: MQNITQSWFVQGMIKATTDAWLKGWDERNGGNLTLRLDDADIAPYKDNFHAQPRYIPLSQPMPLLANTPFIVTGSGKFFRNVQLDPAANLGVVKVDSDGAGYHILWGLTNEAVPTSELPAHFLSHCERIKATNGKDRVIMHCHATNLIALTYVLENDTAVFTRQLWEGSTECLVVFPDGVGILPWMVPGTDEIGQATAQEMQKHSLVLWPFHGVFGSGSTLDETFGLIDTAEKSAQVLVKVYSMGGMKQTISREELIALGKRFGVTPLASALAL.

Residue Glu117 is part of the active site. His141, His143, and His212 together coordinate Zn(2+).

It belongs to the aldolase class II family. RhaD subfamily. As to quaternary structure, homotetramer. Zn(2+) is required as a cofactor.

Its subcellular location is the cytoplasm. It carries out the reaction L-rhamnulose 1-phosphate = (S)-lactaldehyde + dihydroxyacetone phosphate. It participates in carbohydrate degradation; L-rhamnose degradation; glycerone phosphate from L-rhamnose: step 3/3. Catalyzes the reversible cleavage of L-rhamnulose-1-phosphate to dihydroxyacetone phosphate (DHAP) and L-lactaldehyde. This is Rhamnulose-1-phosphate aldolase from Escherichia coli (strain SE11).